The chain runs to 464 residues: Kynureninase (464 aa).

The residue at position 1 (Met1) is an N-acetylmethionine. Residues Leu137, Thr138, 165 to 168, Ser221, Asp250, His253, and Tyr275 each bind pyridoxal 5'-phosphate; that span reads FPSD. Position 276 is an N6-(pyridoxal phosphate)lysine (Lys276). Positions 305 and 333 each coordinate pyridoxal 5'-phosphate.

It belongs to the kynureninase family. Homodimer. It depends on pyridoxal 5'-phosphate as a cofactor. As to expression, high levels in liver and kidney. Also detected in heart, retina, ovary. Lung, testis and brain.

It is found in the cytoplasm. The protein resides in the cytosol. It catalyses the reaction L-kynurenine + H2O = anthranilate + L-alanine + H(+). The catalysed reaction is 3-hydroxy-L-kynurenine + H2O = 3-hydroxyanthranilate + L-alanine + H(+). It functions in the pathway amino-acid degradation; L-kynurenine degradation; L-alanine and anthranilate from L-kynurenine: step 1/1. It participates in cofactor biosynthesis; NAD(+) biosynthesis; quinolinate from L-kynurenine: step 2/3. Its activity is regulated as follows. Inhibited by o-methylbenzoylalanine (OMBA). Catalyzes the cleavage of L-kynurenine (L-Kyn) and L-3-hydroxykynurenine (L-3OHKyn) into anthranilic acid (AA) and 3-hydroxyanthranilic acid (3-OHAA), respectively. Has a preference for the L-3-hydroxy form. Also has cysteine-conjugate-beta-lyase activity. In Rattus norvegicus (Rat), this protein is Kynureninase (Kynu).